Consider the following 189-residue polypeptide: Probable nicotinate-nucleotide adenylyltransferase (189 aa).

Belongs to the NadD family.

It catalyses the reaction nicotinate beta-D-ribonucleotide + ATP + H(+) = deamido-NAD(+) + diphosphate. The protein operates within cofactor biosynthesis; NAD(+) biosynthesis; deamido-NAD(+) from nicotinate D-ribonucleotide: step 1/1. Functionally, catalyzes the reversible adenylation of nicotinate mononucleotide (NaMN) to nicotinic acid adenine dinucleotide (NaAD). The sequence is that of Probable nicotinate-nucleotide adenylyltransferase from Bacillus mycoides (strain KBAB4) (Bacillus weihenstephanensis).